A 374-amino-acid chain; its full sequence is Ribosomal large subunit pseudouridine synthase D (374 aa).

Positions 1-20 (MQNTSFDNESDYSDDSDFAS) are disordered. A compositionally biased stretch (acidic residues) spans 8-17 (NESDYSDDSD). The region spanning 39-112 (GRLDAVLAKL…MALDIVYEDD (74 aa)) is the S4 RNA-binding domain. Residue Asp-160 is part of the active site.

Belongs to the pseudouridine synthase RluA family.

Its subcellular location is the cytoplasm. It carries out the reaction uridine(1911/1915/1917) in 23S rRNA = pseudouridine(1911/1915/1917) in 23S rRNA. In terms of biological role, responsible for synthesis of pseudouridine from uracil at positions 1911, 1915 and 1917 in 23S ribosomal RNA. The protein is Ribosomal large subunit pseudouridine synthase D (rluD) of Neisseria meningitidis serogroup A / serotype 4A (strain DSM 15465 / Z2491).